The chain runs to 166 residues: Specificity protein transcription factor 2 (166 aa).

Residues Ser17–Ala45 are disordered. A compositionally biased stretch (low complexity) spans Pro31 to Ser42. 3 consecutive C2H2-type zinc fingers follow at residues His77–His101, Phe107–His131, and Phe137–His160.

This sequence belongs to the Sp1 C2H2-type zinc-finger protein family.

Its function is as follows. Transcription factor. Probably acts downstream of the Wnt signaling pathway. This chain is Specificity protein transcription factor 2, found in Caenorhabditis elegans.